Here is a 171-residue protein sequence, read N- to C-terminus: Large ribosomal subunit protein bL17 (171 aa).

The disordered stretch occupies residues 130–171; the sequence is PGYKKSKGKKATKAKGKKAKATPAAEAAAAATTEAAPAEEKK. Residues 133 to 149 are compositionally biased toward basic residues; it reads KKSKGKKATKAKGKKAK. Positions 150–165 are enriched in low complexity; sequence ATPAAEAAAAATTEAA.

The protein belongs to the bacterial ribosomal protein bL17 family. Part of the 50S ribosomal subunit. Contacts protein L32.

The polypeptide is Large ribosomal subunit protein bL17 (Opitutus terrae (strain DSM 11246 / JCM 15787 / PB90-1)).